The following is a 205-amino-acid chain: Ribosomal RNA large subunit methyltransferase E (205 aa).

Residues Gly60, Trp62, Asp80, Asp96, and Asp121 each contribute to the S-adenosyl-L-methionine site. Residue Lys161 is the Proton acceptor of the active site.

The protein belongs to the class I-like SAM-binding methyltransferase superfamily. RNA methyltransferase RlmE family.

It localises to the cytoplasm. It catalyses the reaction uridine(2552) in 23S rRNA + S-adenosyl-L-methionine = 2'-O-methyluridine(2552) in 23S rRNA + S-adenosyl-L-homocysteine + H(+). Its function is as follows. Specifically methylates the uridine in position 2552 of 23S rRNA at the 2'-O position of the ribose in the fully assembled 50S ribosomal subunit. The sequence is that of Ribosomal RNA large subunit methyltransferase E from Dechloromonas aromatica (strain RCB).